The primary structure comprises 61 residues: Small ribosomal subunit protein uS14 (61 aa).

Positions 24, 27, 40, and 43 each coordinate Zn(2+).

This sequence belongs to the universal ribosomal protein uS14 family. Zinc-binding uS14 subfamily. In terms of assembly, part of the 30S ribosomal subunit. Contacts proteins S3 and S10. The cofactor is Zn(2+).

Binds 16S rRNA, required for the assembly of 30S particles and may also be responsible for determining the conformation of the 16S rRNA at the A site. This is Small ribosomal subunit protein uS14 from Clostridium botulinum (strain ATCC 19397 / Type A).